Reading from the N-terminus, the 492-residue chain is Cytochrome P450 2B19 (492 aa).

At S129 the chain carries Phosphoserine; by PKA. A heme-binding site is contributed by C437.

The protein belongs to the cytochrome P450 family. It depends on heme as a cofactor. As to expression, expressed only in differentiated keratinocytes in skin.

It localises to the endoplasmic reticulum membrane. The protein localises to the microsome membrane. The catalysed reaction is an organic molecule + reduced [NADPH--hemoprotein reductase] + O2 = an alcohol + oxidized [NADPH--hemoprotein reductase] + H2O + H(+). Functionally, cytochromes P450 are a group of heme-thiolate monooxygenases. In liver microsomes, this enzyme is involved in an NADPH-dependent electron transport pathway. It oxidizes a variety of structurally unrelated compounds, including steroids, fatty acids, and xenobiotics. This is Cytochrome P450 2B19 (Cyp2b19) from Mus musculus (Mouse).